The chain runs to 1047 residues: Ribonucleoside-diphosphate reductase subunit alpha (1047 aa).

3 ATP-cone domains span residues 9–111 (CTIV…KAHR), 118–219 (LSVI…ARVR), and 237–327 (FEVL…EALD). Residues Thr-442, 457 to 458 (SC), Gly-486, 670 to 674 (NLCTE), and 857 to 861 (PTATI) each bind substrate. Residues Cys-458 and Cys-687 are joined by a disulfide bond. Asn-670 functions as the Proton acceptor in the catalytic mechanism. Cys-672 serves as the catalytic Cysteine radical intermediate. Glu-674 serves as the catalytic Proton acceptor.

This sequence belongs to the ribonucleoside diphosphate reductase large chain family. In terms of assembly, tetramer of two alpha and two beta subunits.

The enzyme catalyses a 2'-deoxyribonucleoside 5'-diphosphate + [thioredoxin]-disulfide + H2O = a ribonucleoside 5'-diphosphate + [thioredoxin]-dithiol. With respect to regulation, under complex allosteric control mediated by deoxynucleoside triphosphates and ATP binding. The type of nucleotide bound at the specificity site determines substrate preference. It seems probable that ATP makes the enzyme reduce CDP and UDP, dGTP favors ADP reduction and dTTP favors GDP reduction. Its function is as follows. Provides the precursors necessary for DNA synthesis. Catalyzes the biosynthesis of deoxyribonucleotides from the corresponding ribonucleotides. This is Ribonucleoside-diphosphate reductase subunit alpha (nrdA) from Chlamydia muridarum (strain MoPn / Nigg).